A 118-amino-acid polypeptide reads, in one-letter code: Putative pterin-4-alpha-carbinolamine dehydratase (118 aa).

Belongs to the pterin-4-alpha-carbinolamine dehydratase family.

The catalysed reaction is (4aS,6R)-4a-hydroxy-L-erythro-5,6,7,8-tetrahydrobiopterin = (6R)-L-erythro-6,7-dihydrobiopterin + H2O. This Pseudomonas fluorescens (strain ATCC BAA-477 / NRRL B-23932 / Pf-5) protein is Putative pterin-4-alpha-carbinolamine dehydratase.